Reading from the N-terminus, the 190-residue chain is Dynactin subunit 6 (190 aa).

The residue at position 186 (threonine 186) is a Phosphothreonine; by CDK1.

Belongs to the dynactin subunits 5/6 family. Dynactin subunit 6 subfamily. In terms of assembly, subunit of dynactin, a multiprotein complex part of a tripartite complex with dynein and a adapter, such as BICDL1, BICD2 or HOOK3. The dynactin complex is built around ACTR1A/ACTB filament and consists of an actin-related filament composed of a shoulder domain, a pointed end and a barbed end. Its length is defined by its flexible shoulder domain. The soulder is composed of 2 DCTN1 subunits, 4 DCTN2 and 2 DCTN3. The 4 DCNT2 (via N-terminus) bind the ACTR1A filament and act as molecular rulers to determine the length. The pointed end is important for binding dynein-dynactin cargo adapters. Consists of 4 subunits: ACTR10, DCNT4, DCTN5 and DCTN6. Within the complex DCTN6 forms a heterodimer with DCTN5. The barbed end is composed of a CAPZA1:CAPZB heterodimers, which binds ACTR1A/ACTB filament and dynactin and stabilizes dynactin. Interacts with PLK1. Interacts with N4BP2L1. Phosphorylation at Thr-186 by CDK1 during mitotic prometaphase creates a binding site for PLK1 that facilitates its recruitment to kinetochores.

The protein localises to the cytoplasm. It localises to the cytoskeleton. The protein resides in the chromosome. It is found in the centromere. Its subcellular location is the kinetochore. Part of the dynactin complex that activates the molecular motor dynein for ultra-processive transport along microtubules. The chain is Dynactin subunit 6 (DCTN6) from Bos taurus (Bovine).